Here is a 297-residue protein sequence, read N- to C-terminus: tRNA pseudouridine synthase A (297 aa).

D57 (nucleophile) is an active-site residue. Y115 lines the substrate pocket.

The protein belongs to the tRNA pseudouridine synthase TruA family. As to quaternary structure, homodimer.

It catalyses the reaction uridine(38/39/40) in tRNA = pseudouridine(38/39/40) in tRNA. In terms of biological role, formation of pseudouridine at positions 38, 39 and 40 in the anticodon stem and loop of transfer RNAs. This chain is tRNA pseudouridine synthase A, found in Nitratidesulfovibrio vulgaris (strain ATCC 29579 / DSM 644 / CCUG 34227 / NCIMB 8303 / VKM B-1760 / Hildenborough) (Desulfovibrio vulgaris).